The primary structure comprises 344 residues: MEPIDDRIMVTGGAGYIGSHTVIELIEAGYTPVIVDNLSNSSLEAIKRVESITGKEIEFHHVDIMNEKALDEIFETGNIRSVIHFAGLKAVGESNKLPLKYYNNNIAGTLTLLNLMDKHRVKKLVFSSSATVYGDPHTVPITEDFPLSATNPYGRTKLYVEGILQDLCASDPEWNCIMLRYFNPVGAHPSGLIGEDPKDIPNNLMPYVTQTAIGKRPILSIFGNDYNTPDGTGVRDFIHVVDLAKGHISALSSLHSKKQGCVAYNLGTGRGYSVLEMVGALKQASHKEIPYQIVSRRKGDVASSFADPSKALKELGWKATHNQDDMCRDAWKWQSLNPNGYSDS.

NAD(+) is bound by residues 15 to 17, 36 to 40, 63 to 64, F85, and K89; these read GYI, DNLSN, and DI. 129-131 lines the substrate pocket; it reads SAT. Residue Y153 is the Proton acceptor of the active site. Residues K157 and Y181 each coordinate NAD(+). Residues 181-183, 202-204, 220-222, R235, and 297-300 each bind substrate; these read YFN, NNL, SIF, and RKGD.

It belongs to the NAD(P)-dependent epimerase/dehydratase family. As to quaternary structure, homodimer. Requires NAD(+) as cofactor.

The catalysed reaction is UDP-alpha-D-glucose = UDP-alpha-D-galactose. The enzyme catalyses UDP-N-acetyl-alpha-D-glucosamine = UDP-N-acetyl-alpha-D-galactosamine. It participates in carbohydrate metabolism; galactose metabolism. Functionally, catalyzes two distinct but analogous reactions: the reversible epimerization of UDP-glucose to UDP-galactose and the reversible epimerization of UDP-N-acetylglucosamine to UDP-N-acetylgalactosamine. The reaction with UDP-Gal plays a critical role in the Leloir pathway of galactose catabolism in which galactose is converted to the glycolytic intermediate glucose 6-phosphate. It contributes to the catabolism of dietary galactose and enables the endogenous biosynthesis of both UDP-Gal and UDP-GalNAc when exogenous sources are limited. Both UDP-sugar interconversions are important in the synthesis of glycoproteins and glycolipids. The chain is UDP-glucose 4-epimerase (galE) from Dictyostelium discoideum (Social amoeba).